Reading from the N-terminus, the 510-residue chain is NADH-quinone oxidoreductase subunit N (510 aa).

14 consecutive transmembrane segments (helical) span residues 14-34 (LLPE…DLFA), 42-62 (VIGW…IINM), 84-104 (AFKL…LSYL), 113-133 (GEYY…ASSA), 135-155 (LITL…LVGL), 170-190 (VVSG…VYGL), 208-228 (MAGY…GLAF), 247-267 (PTPV…ALIF), 286-306 (FFFE…MIIG), 323-343 (SGIA…SLFF), 346-366 (VIFY…VIMV), 390-410 (AIAM…VGFF), 426-446 (WLAA…FGII), and 466-486 (IWTF…FPGL).

The protein belongs to the complex I subunit 2 family. As to quaternary structure, NDH-1 is composed of 14 different subunits. Subunits NuoA, H, J, K, L, M, N constitute the membrane sector of the complex.

Its subcellular location is the cell membrane. The enzyme catalyses a quinone + NADH + 5 H(+)(in) = a quinol + NAD(+) + 4 H(+)(out). Functionally, NDH-1 shuttles electrons from NADH, via FMN and iron-sulfur (Fe-S) centers, to quinones in the respiratory chain. The immediate electron acceptor for the enzyme in this species is believed to be a menaquinone. Couples the redox reaction to proton translocation (for every two electrons transferred, four hydrogen ions are translocated across the cytoplasmic membrane), and thus conserves the redox energy in a proton gradient. This Brevibacillus brevis (strain 47 / JCM 6285 / NBRC 100599) protein is NADH-quinone oxidoreductase subunit N.